The sequence spans 85 residues: NAD(P)H-quinone oxidoreductase subunit L (85 aa).

2 helical membrane passes run 17-37 and 54-74; these read IVAV…PGFV and AFMY…SPFL.

It belongs to the complex I NdhL subunit family. NDH-1 can be composed of about 15 different subunits; different subcomplexes with different compositions have been identified which probably have different functions.

Its subcellular location is the cellular thylakoid membrane. It carries out the reaction a plastoquinone + NADH + (n+1) H(+)(in) = a plastoquinol + NAD(+) + n H(+)(out). The enzyme catalyses a plastoquinone + NADPH + (n+1) H(+)(in) = a plastoquinol + NADP(+) + n H(+)(out). Its function is as follows. NDH-1 shuttles electrons from an unknown electron donor, via FMN and iron-sulfur (Fe-S) centers, to quinones in the respiratory and/or the photosynthetic chain. The immediate electron acceptor for the enzyme in this species is believed to be plastoquinone. Couples the redox reaction to proton translocation, and thus conserves the redox energy in a proton gradient. Cyanobacterial NDH-1 also plays a role in inorganic carbon-concentration. The chain is NAD(P)H-quinone oxidoreductase subunit L from Crocosphaera subtropica (strain ATCC 51142 / BH68) (Cyanothece sp. (strain ATCC 51142)).